The primary structure comprises 233 residues: Probable fimbrial chaperone protein ElfD (233 aa).

The N-terminal stretch at 1–26 (MKTCITKGIVTVSLTAILLSCSSAWA) is a signal peptide.

Belongs to the periplasmic pilus chaperone family.

It is found in the periplasm. In terms of biological role, part of the elfADCG-ycbUVF fimbrial operon, which promotes adhesion of bacteria to different abiotic surfaces. Could be required for the biogenesis of the ElfA fimbriae. The chain is Probable fimbrial chaperone protein ElfD (elfD) from Escherichia coli (strain K12).